We begin with the raw amino-acid sequence, 184 residues long: dITP/XTP pyrophosphatase (184 aa).

A substrate-binding site is contributed by 7-12; that stretch reads TSNPGK. Residues E36 and D65 each coordinate Mg(2+). The active-site Proton acceptor is the D65. Residues S66, 139–142, K162, and 167–168 contribute to the substrate site; these read FGFD and HR.

This sequence belongs to the HAM1 NTPase family. As to quaternary structure, homodimer. The cofactor is Mg(2+).

The catalysed reaction is XTP + H2O = XMP + diphosphate + H(+). The enzyme catalyses dITP + H2O = dIMP + diphosphate + H(+). It catalyses the reaction ITP + H2O = IMP + diphosphate + H(+). Pyrophosphatase that catalyzes the hydrolysis of nucleoside triphosphates to their monophosphate derivatives, with a high preference for the non-canonical purine nucleotides XTP (xanthosine triphosphate), dITP (deoxyinosine triphosphate) and ITP. Seems to function as a house-cleaning enzyme that removes non-canonical purine nucleotides from the nucleotide pool, thus preventing their incorporation into DNA/RNA and avoiding chromosomal lesions. The chain is dITP/XTP pyrophosphatase from Thermococcus kodakarensis (strain ATCC BAA-918 / JCM 12380 / KOD1) (Pyrococcus kodakaraensis (strain KOD1)).